Consider the following 296-residue polypeptide: Putative F-box protein At1g67623 (296 aa).

The F-box domain occupies 21–70 (SLCLDSLPEDLLVEISSCTGASSLSAVRNLRLVSKSFRRICDEKYVFYRL).

This is Putative F-box protein At1g67623 from Arabidopsis thaliana (Mouse-ear cress).